The primary structure comprises 373 residues: Glutamate 5-kinase (373 aa).

ATP is bound at residue Lys15. Positions 56, 143, and 155 each coordinate substrate. ATP is bound at residue 175–176 (SD). Positions 281-358 (KGTLTIDAGA…PDVMTILGIS (78 aa)) constitute a PUA domain.

Belongs to the glutamate 5-kinase family.

The protein localises to the cytoplasm. It carries out the reaction L-glutamate + ATP = L-glutamyl 5-phosphate + ADP. The protein operates within amino-acid biosynthesis; L-proline biosynthesis; L-glutamate 5-semialdehyde from L-glutamate: step 1/2. Catalyzes the transfer of a phosphate group to glutamate to form L-glutamate 5-phosphate. The sequence is that of Glutamate 5-kinase from Bradyrhizobium diazoefficiens (strain JCM 10833 / BCRC 13528 / IAM 13628 / NBRC 14792 / USDA 110).